A 125-amino-acid chain; its full sequence is Large ribosomal subunit protein bL12 (125 aa).

Belongs to the bacterial ribosomal protein bL12 family. Homodimer. Part of the ribosomal stalk of the 50S ribosomal subunit. Forms a multimeric L10(L12)X complex, where L10 forms an elongated spine to which 2 to 4 L12 dimers bind in a sequential fashion. Binds GTP-bound translation factors.

Forms part of the ribosomal stalk which helps the ribosome interact with GTP-bound translation factors. Is thus essential for accurate translation. The protein is Large ribosomal subunit protein bL12 of Mesorhizobium japonicum (strain LMG 29417 / CECT 9101 / MAFF 303099) (Mesorhizobium loti (strain MAFF 303099)).